Reading from the N-terminus, the 271-residue chain is Tryptophan synthase alpha chain (271 aa).

Catalysis depends on proton acceptor residues glutamate 49 and aspartate 60.

It belongs to the TrpA family. In terms of assembly, tetramer of two alpha and two beta chains.

The enzyme catalyses (1S,2R)-1-C-(indol-3-yl)glycerol 3-phosphate + L-serine = D-glyceraldehyde 3-phosphate + L-tryptophan + H2O. It functions in the pathway amino-acid biosynthesis; L-tryptophan biosynthesis; L-tryptophan from chorismate: step 5/5. Its function is as follows. The alpha subunit is responsible for the aldol cleavage of indoleglycerol phosphate to indole and glyceraldehyde 3-phosphate. The sequence is that of Tryptophan synthase alpha chain from Burkholderia pseudomallei (strain 1106a).